Here is a 209-residue protein sequence, read N- to C-terminus: Geminin (209 aa).

The tract at residues 1–79 is disordered; that stretch reads MNPSMKQKQE…PESSENKNLG (79 aa). Residues 7-16 show a composition bias toward basic and acidic residues; it reads QKQEEIKENI. Lysine 27 bears the N6-acetyllysine mark. Phosphoserine occurs at positions 34, 36, 49, 63, and 64. Residues 82-161 form a necessary and sufficient for interaction with IDAS and CDT1 region; it reads TQESFDLMIK…AELIERLNGE (80 aa). The stretch at 94–144 forms a coiled coil; it reads PSSQYWKEVAEKRRKALYEALKENEKLHKEIEQKDNEIARLKKENKELAEV. The interval 164 to 209 is disordered; sequence DNFESLDNQEFDSEEETVEDSLVEDSEIGTCAEGTVSSSTDAKPCI. The segment at 170 to 190 is homeodomain binding; it reads DNQEFDSEEETVEDSLVEDSE. Residues 170 to 190 are compositionally biased toward acidic residues; it reads DNQEFDSEEETVEDSLVEDSE. Residue serine 184 is modified to Phosphoserine; by CK2. Residues 198–209 show a composition bias toward polar residues; the sequence is TVSSSTDAKPCI.

The protein belongs to the geminin family. Homotetramer. Interacts with CDT1; this inhibits binding of the MCM complex to origins of replication. The complex with CDT1 exists in two forms, a 'permissive' heterotrimer and an 'inhibitory' heterohexamer. Interacts (via coiled-coil domain) with IDAS (via coiled-coil domain); this targets GMNN to the nucleus. The heterodimer formed by GMNN and MCIDAS has much lower affinity for CDT1 than the GMNN homodimer. Interacts with a subset of Hox proteins, affinity increasing from anterior to posterior types, the strongest interaction being with HOXB1, HOXC9 and HOXD10. Interacts with LRWD1 from G1/S to mitosis. In terms of processing, phosphorylated during mitosis. Phosphorylation at Ser-184 by CK2 results in enhanced binding to Hox proteins and more potent inhibitory effect on Hox transcriptional activity.

The protein resides in the cytoplasm. It is found in the nucleus. Inhibits DNA replication by preventing the incorporation of MCM complex into pre-replication complex (pre-RC). It is degraded during the mitotic phase of the cell cycle. Its destruction at the metaphase-anaphase transition permits replication in the succeeding cell cycle. Inhibits histone acetyltransferase activity of KAT7/HBO1 in a CDT1-dependent manner, inhibiting histone H4 acetylation and DNA replication licensing. Inhibits the transcriptional activity of a subset of Hox proteins, enrolling them in cell proliferative control. This chain is Geminin (GMNN), found in Homo sapiens (Human).